The primary structure comprises 785 residues: Phenylalanine--tRNA ligase beta subunit (785 aa).

In terms of domain architecture, tRNA-binding spans 39–148 (APAFSGVVIA…ADAPVGQSIR (110 aa)). The B5 domain occupies 399–474 (PKRQAVQLRA…RVYGYNNIPA (76 aa)). The Mg(2+) site is built by D452, D458, E461, and E462. Residues 692–784 (SKFQPVRRDL…AASELGAQLR (93 aa)) enclose the FDX-ACB domain.

Belongs to the phenylalanyl-tRNA synthetase beta subunit family. Type 1 subfamily. In terms of assembly, tetramer of two alpha and two beta subunits. It depends on Mg(2+) as a cofactor.

It is found in the cytoplasm. The enzyme catalyses tRNA(Phe) + L-phenylalanine + ATP = L-phenylalanyl-tRNA(Phe) + AMP + diphosphate + H(+). In Chromobacterium violaceum (strain ATCC 12472 / DSM 30191 / JCM 1249 / CCUG 213 / NBRC 12614 / NCIMB 9131 / NCTC 9757 / MK), this protein is Phenylalanine--tRNA ligase beta subunit.